Reading from the N-terminus, the 37-residue chain is Large ribosomal subunit protein bL36c (37 aa).

It belongs to the bacterial ribosomal protein bL36 family.

The protein localises to the plastid. The protein is Large ribosomal subunit protein bL36c of Cuscuta exaltata (Tall dodder).